A 225-amino-acid chain; its full sequence is 2-C-methyl-D-erythritol 4-phosphate cytidylyltransferase (225 aa).

Belongs to the IspD/TarI cytidylyltransferase family. IspD subfamily.

The catalysed reaction is 2-C-methyl-D-erythritol 4-phosphate + CTP + H(+) = 4-CDP-2-C-methyl-D-erythritol + diphosphate. It functions in the pathway isoprenoid biosynthesis; isopentenyl diphosphate biosynthesis via DXP pathway; isopentenyl diphosphate from 1-deoxy-D-xylulose 5-phosphate: step 2/6. Its function is as follows. Catalyzes the formation of 4-diphosphocytidyl-2-C-methyl-D-erythritol from CTP and 2-C-methyl-D-erythritol 4-phosphate (MEP). This Prochlorococcus marinus (strain NATL2A) protein is 2-C-methyl-D-erythritol 4-phosphate cytidylyltransferase.